The primary structure comprises 212 residues: Octanoyltransferase (212 aa).

Residues 31–209 enclose the BPL/LPL catalytic domain; sequence AETQDEIWLV…HFANLLGYNI (179 aa). Substrate-binding positions include 70-77, 138-140, and 151-153; these read RGGQITYH, SLG, and GLA. Residue cysteine 169 is the Acyl-thioester intermediate of the active site.

This sequence belongs to the LipB family.

The protein resides in the cytoplasm. It catalyses the reaction octanoyl-[ACP] + L-lysyl-[protein] = N(6)-octanoyl-L-lysyl-[protein] + holo-[ACP] + H(+). Its pathway is protein modification; protein lipoylation via endogenous pathway; protein N(6)-(lipoyl)lysine from octanoyl-[acyl-carrier-protein]: step 1/2. In terms of biological role, catalyzes the transfer of endogenously produced octanoic acid from octanoyl-acyl-carrier-protein onto the lipoyl domains of lipoate-dependent enzymes. Lipoyl-ACP can also act as a substrate although octanoyl-ACP is likely to be the physiological substrate. The sequence is that of Octanoyltransferase from Haemophilus influenzae (strain ATCC 51907 / DSM 11121 / KW20 / Rd).